The chain runs to 214 residues: Probable transaldolase (214 aa).

Lys-83 (schiff-base intermediate with substrate) is an active-site residue.

Belongs to the transaldolase family. Type 3B subfamily.

It localises to the cytoplasm. The catalysed reaction is D-sedoheptulose 7-phosphate + D-glyceraldehyde 3-phosphate = D-erythrose 4-phosphate + beta-D-fructose 6-phosphate. The protein operates within carbohydrate degradation; pentose phosphate pathway; D-glyceraldehyde 3-phosphate and beta-D-fructose 6-phosphate from D-ribose 5-phosphate and D-xylulose 5-phosphate (non-oxidative stage): step 2/3. Transaldolase is important for the balance of metabolites in the pentose-phosphate pathway. In Thermodesulfovibrio yellowstonii (strain ATCC 51303 / DSM 11347 / YP87), this protein is Probable transaldolase.